Reading from the N-terminus, the 242-residue chain is Alpha-aspartyl dipeptidase (242 aa).

Active-site charge relay system residues include Ser-125, Asp-140, and His-162.

The protein belongs to the peptidase S51 family.

Its subcellular location is the cytoplasm. It carries out the reaction Dipeptidase E catalyzes the hydrolysis of dipeptides Asp-|-Xaa. It does not act on peptides with N-terminal Glu, Asn or Gln, nor does it cleave isoaspartyl peptides.. In terms of biological role, hydrolyzes dipeptides containing N-terminal aspartate residues. The polypeptide is Alpha-aspartyl dipeptidase (aad-a) (Xenopus laevis (African clawed frog)).